The following is a 943-amino-acid chain: Protein translocase subunit SecA (943 aa).

Residues Gln90, 108–112, and Asp509 contribute to the ATP site; that span reads GEGKT. Residues 535-564 are disordered; sequence PDNEHKPPIPKQRNSKSKGGFSKKASSKLK.

This sequence belongs to the SecA family. Monomer and homodimer. Part of the essential Sec protein translocation apparatus which comprises SecA, SecYEG and auxiliary proteins SecDF. Other proteins may also be involved.

The protein localises to the cell inner membrane. It localises to the cellular thylakoid membrane. The protein resides in the cytoplasm. The enzyme catalyses ATP + H2O + cellular proteinSide 1 = ADP + phosphate + cellular proteinSide 2.. Functionally, part of the Sec protein translocase complex. Interacts with the SecYEG preprotein conducting channel. Has a central role in coupling the hydrolysis of ATP to the transfer of proteins into and across the cell membrane, serving as an ATP-driven molecular motor driving the stepwise translocation of polypeptide chains across the membrane. Probably participates in protein translocation into and across both the cytoplasmic and thylakoid membranes in cyanobacterial cells. This Prochlorococcus marinus (strain MIT 9215) protein is Protein translocase subunit SecA.